A 410-amino-acid polypeptide reads, in one-letter code: Cysteine desulfurase IscS (410 aa).

Residues 80–81 (AT), asparagine 160, glutamine 188, and 208–210 (SGH) contribute to the pyridoxal 5'-phosphate site. Lysine 211 carries the post-translational modification N6-(pyridoxal phosphate)lysine. Threonine 248 lines the pyridoxal 5'-phosphate pocket. Cysteine 334 acts as the Cysteine persulfide intermediate in catalysis. Cysteine 334 contributes to the [2Fe-2S] cluster binding site.

Belongs to the class-V pyridoxal-phosphate-dependent aminotransferase family. NifS/IscS subfamily. In terms of assembly, homodimer. Forms a heterotetramer with IscU, interacts with other sulfur acceptors. Pyridoxal 5'-phosphate serves as cofactor.

The protein localises to the cytoplasm. The catalysed reaction is (sulfur carrier)-H + L-cysteine = (sulfur carrier)-SH + L-alanine. It functions in the pathway cofactor biosynthesis; iron-sulfur cluster biosynthesis. Master enzyme that delivers sulfur to a number of partners involved in Fe-S cluster assembly, tRNA modification or cofactor biosynthesis. Catalyzes the removal of elemental sulfur atoms from cysteine to produce alanine. Functions as a sulfur delivery protein for Fe-S cluster synthesis onto IscU, an Fe-S scaffold assembly protein, as well as other S acceptor proteins. The chain is Cysteine desulfurase IscS from Rickettsia rickettsii (strain Iowa).